The primary structure comprises 808 residues: Ribosome biogenesis protein BOP1 homolog (808 aa).

The tract at residues 1–56 is disordered; that stretch reads MTSPKGKPSPKRSAPAPTTAALTPRTEERTEGATSSASASASSHISSSFDSPRDDT. Low complexity-rich tracts occupy residues 12-24 and 33-50; these read RSAPAPTTAALTP and ATSSASASASSHISSSFD. 5 WD repeats span residues 430–469, 640–680, 682–720, 724–766, and 777–808; these read GHTATVRSVSVSPNGQYLATGCDDHLVRVFEVQTGRLMKR, KFSE…RRFK, SGGVTTCLSIHPEGDNFLVGDTTSHTSWFDMDFSDKPYK, SHRG…DYNK, and KHQRPVYAVAWHPTLAWLFTSTEDGVVTAWTE.

It belongs to the WD repeat BOP1/ERB1 family.

The protein resides in the nucleus. It is found in the nucleolus. The protein localises to the nucleoplasm. Functionally, required for maturation of ribosomal RNAs and formation of the large ribosomal subunit. This is Ribosome biogenesis protein BOP1 homolog from Leishmania infantum.